A 302-amino-acid chain; its full sequence is MIINGVTIDDTFAEAFGMRGTRVIITAQNLRWAYNAARAMTGFATSVIACGVEAGIERELTPEETPDGRPGVSILMFAMSSAVLIKQLETRMGQCVLTCPTAAAFSGIDEGYPEITRINLGKNLRFFGDGFQISKVFNGKRYWRVPVMDGEFLTEETTGMIRSVGGGNFLILAESQPQALAACEAAIDAMSKIPNVIMPFPGGVVRSGSKVGSKYKALIASTNDAFCPTLKGITKTELSPEIESVMEIVIDGLTDPDIRVAMRAGIAAACELGAKNGIKRISAGNYGGKLGPYHFKLREIMA.

This sequence belongs to the FTR family. Homotetramer.

It localises to the cytoplasm. It carries out the reaction N-formylmethanofuran + 5,6,7,8-tetrahydromethanopterin + H(+) = N(5)-formyl-5,6,7,8-tetrahydromethanopterin + methanofuran. It functions in the pathway one-carbon metabolism; formaldehyde degradation; formate from formaldehyde (H(4)MPT route): step 4/5. Functionally, catalyzes the transfer of a formyl group from 5-formyl tetrahydromethanopterin (5-formyl-H(4)MPT) to methanofuran (MFR) to produce formylmethanofuran (formyl-MFR) and tetrahydromethanopterin (H(4)MPT). This is Formylmethanofuran--tetrahydromethanopterin formyltransferase from Methylobacillus flagellatus (strain ATCC 51484 / DSM 6875 / VKM B-1610 / KT).